The chain runs to 381 residues: Alanine racemase, catabolic (381 aa).

The active-site Proton acceptor; specific for D-alanine is the Lys-55. Lys-55 is subject to N6-(pyridoxal phosphate)lysine. Arg-154 is a substrate binding site. Catalysis depends on Tyr-276, which acts as the Proton acceptor; specific for L-alanine. Substrate is bound at residue Met-322.

The protein belongs to the alanine racemase family. Pyridoxal 5'-phosphate serves as cofactor.

It carries out the reaction L-alanine = D-alanine. Functionally, isomerizes L-alanine to D-alanine which is then oxidized to pyruvate by DadA. This Mesorhizobium japonicum (strain LMG 29417 / CECT 9101 / MAFF 303099) (Mesorhizobium loti (strain MAFF 303099)) protein is Alanine racemase, catabolic (dadB).